Reading from the N-terminus, the 262-residue chain is Proliferating cell nuclear antigen (262 aa).

Residues 61-80 (RCDRNIAMGVNLNSMSKILK) mediate DNA binding. Lys164 participates in a covalent cross-link: Glycyl lysine isopeptide (Lys-Gly) (interchain with G-Cter in ubiquitin).

This sequence belongs to the PCNA family. In terms of assembly, homotrimer. Forms a complex with activator 1 heteropentamer in the presence of ATP. Component of the replisome complex. Monoubiquitinated by the UBE2B-RAD18 complex on Lys-164. Monoubiquitination at Lys-164 also takes place in undamaged proliferating cells, and is mediated by the DCX(DTL) complex, leading to enhance PCNA-dependent translesion DNA synthesis.

Its subcellular location is the nucleus. This protein is an auxiliary protein of DNA polymerase delta and is involved in the control of eukaryotic DNA replication by increasing the polymerase's processibility during elongation of the leading strand. This Coturnix japonica (Japanese quail) protein is Proliferating cell nuclear antigen (PCNA).